The primary structure comprises 38 residues: Large ribosomal subunit protein bL36 (38 aa).

Belongs to the bacterial ribosomal protein bL36 family.

This chain is Large ribosomal subunit protein bL36, found in Paraburkholderia phymatum (strain DSM 17167 / CIP 108236 / LMG 21445 / STM815) (Burkholderia phymatum).